The sequence spans 514 residues: Activin receptor type-2A (514 aa).

The first 20 residues, Met-1–Gly-20, serve as a signal peptide directing secretion. Topologically, residues Ser-21 to Pro-136 are extracellular. Intrachain disulfides connect Cys-31/Cys-61, Cys-51/Cys-79, Cys-86/Cys-105, Cys-92/Cys-104, and Cys-106/Cys-111. Residues Asn-46, Asn-67, and Asn-88 are each glycosylated (N-linked (GlcNAc...) asparagine). A helical membrane pass occupies residues Leu-137–Tyr-162. At Arg-163–Leu-514 the chain is on the cytoplasmic side. Residues Leu-193–Leu-486 form the Protein kinase domain. Residues Lys-199 to Val-207 and Lys-220 each bind ATP. The Proton acceptor role is filled by Asp-323.

This sequence belongs to the protein kinase superfamily. TKL Ser/Thr protein kinase family. TGFB receptor subfamily.

The protein resides in the cell membrane. It catalyses the reaction L-threonyl-[receptor-protein] + ATP = O-phospho-L-threonyl-[receptor-protein] + ADP + H(+). The enzyme catalyses L-seryl-[receptor-protein] + ATP = O-phospho-L-seryl-[receptor-protein] + ADP + H(+). In terms of biological role, receptor for activin A, activin B and inhibin A. Involved in transmembrane signaling. The protein is Activin receptor type-2A (acvr2a) of Xenopus laevis (African clawed frog).